Consider the following 148-residue polypeptide: Large ribosomal subunit protein bL9 (148 aa).

The protein belongs to the bacterial ribosomal protein bL9 family.

Its function is as follows. Binds to the 23S rRNA. The sequence is that of Large ribosomal subunit protein bL9 from Clostridium perfringens (strain ATCC 13124 / DSM 756 / JCM 1290 / NCIMB 6125 / NCTC 8237 / Type A).